A 104-amino-acid polypeptide reads, in one-letter code: Small ribosomal subunit protein uS10 (104 aa).

It belongs to the universal ribosomal protein uS10 family. As to quaternary structure, part of the 30S ribosomal subunit.

In terms of biological role, involved in the binding of tRNA to the ribosomes. This Gloeobacter violaceus (strain ATCC 29082 / PCC 7421) protein is Small ribosomal subunit protein uS10.